The sequence spans 414 residues: Multifunctional CCA protein (414 aa).

Gly-8 and Arg-11 together coordinate ATP. Residues Gly-8 and Arg-11 each contribute to the CTP site. Residues Glu-21 and Asp-23 each coordinate Mg(2+). Residues Arg-91, Arg-137, and Arg-140 each contribute to the ATP site. 3 residues coordinate CTP: Arg-91, Arg-137, and Arg-140. One can recognise an HD domain in the interval 228-329; it reads TGIHTLMTLA…LKLFDAIDVW (102 aa).

It belongs to the tRNA nucleotidyltransferase/poly(A) polymerase family. Bacterial CCA-adding enzyme type 1 subfamily. In terms of assembly, monomer. Can also form homodimers and oligomers. Mg(2+) is required as a cofactor. Ni(2+) serves as cofactor.

The catalysed reaction is a tRNA precursor + 2 CTP + ATP = a tRNA with a 3' CCA end + 3 diphosphate. The enzyme catalyses a tRNA with a 3' CCA end + 2 CTP + ATP = a tRNA with a 3' CCACCA end + 3 diphosphate. Catalyzes the addition and repair of the essential 3'-terminal CCA sequence in tRNAs without using a nucleic acid template. Adds these three nucleotides in the order of C, C, and A to the tRNA nucleotide-73, using CTP and ATP as substrates and producing inorganic pyrophosphate. tRNA 3'-terminal CCA addition is required both for tRNA processing and repair. Also involved in tRNA surveillance by mediating tandem CCA addition to generate a CCACCA at the 3' terminus of unstable tRNAs. While stable tRNAs receive only 3'-terminal CCA, unstable tRNAs are marked with CCACCA and rapidly degraded. In Yersinia enterocolitica serotype O:8 / biotype 1B (strain NCTC 13174 / 8081), this protein is Multifunctional CCA protein.